The chain runs to 348 residues: NADH-quinone oxidoreductase subunit H 1 (348 aa).

8 consecutive transmembrane segments (helical) span residues 11-31, 83-103, 136-156, 172-192, 208-228, 268-288, 289-309, and 324-344; these read IYYI…LLTV, FAFL…FAVI, VGVL…VLAG, SAQM…VFML, GAWY…CSLA, MVTV…GPAF, LPGW…CMWI, and LGWK…GIVV.

It belongs to the complex I subunit 1 family. NDH-1 is composed of 14 different subunits. Subunits NuoA, H, J, K, L, M, N constitute the membrane sector of the complex.

It localises to the cell inner membrane. The enzyme catalyses a quinone + NADH + 5 H(+)(in) = a quinol + NAD(+) + 4 H(+)(out). Functionally, NDH-1 shuttles electrons from NADH, via FMN and iron-sulfur (Fe-S) centers, to quinones in the respiratory chain. The immediate electron acceptor for the enzyme in this species is believed to be ubiquinone. Couples the redox reaction to proton translocation (for every two electrons transferred, four hydrogen ions are translocated across the cytoplasmic membrane), and thus conserves the redox energy in a proton gradient. This subunit may bind ubiquinone. The chain is NADH-quinone oxidoreductase subunit H 1 from Geobacter sulfurreducens (strain ATCC 51573 / DSM 12127 / PCA).